We begin with the raw amino-acid sequence, 290 residues long: Programmed cell death 1 ligand 1 (290 aa).

Residues 1–18 form the signal peptide; the sequence is MRIFAVFIFMTYWHLLNA. The region spanning 19-127 is the Ig-like V-type domain; the sequence is FTVTVPKDLY…YGGADYKRIT (109 aa). Residues 19-238 are Extracellular-facing; it reads FTVTVPKDLY…LPLAHPPNER (220 aa). N-linked (GlcNAc...) asparagine glycosylation is present at Asn35. Cystine bridges form between Cys40–Cys114 and Cys155–Cys209. The Ig-like C2-type domain occupies 133 to 225; the sequence is PYNKINQRIL…PEENHTAELV (93 aa). 3 N-linked (GlcNAc...) asparagine glycosylation sites follow: Asn192, Asn200, and Asn219. A helical membrane pass occupies residues 239 to 259; that stretch reads THLVILGAILLCLGVALTFIF. The Cytoplasmic segment spans residues 260 to 290; it reads RLRKGRMMDVKKCGIQDTNSKKQSDTHLEET.

It belongs to the immunoglobulin superfamily. BTN/MOG family. As to quaternary structure, interacts with PDCD1. Interacts (via transmembrane domain) with CMTM4 and CMTM6. Interacts with (phosphorylated) STAT3; promoting nuclear translocation. Interacts with CD80. May form homomultimers. In terms of processing, ubiquitinated; STUB1 likely mediates polyubiquitination of PD-L1/CD274 triggering its degradation. Ubiquitinated by MARCHF8; leading to degradation. Deubiquitinated by USP22; leading to stabilization. In terms of tissue distribution, highly expressed in the heart, skeletal muscle, placenta and lung. Weakly expressed in the thymus, spleen, kidney and liver. Expressed on activated T- and B-cells, dendritic cells, keratinocytes and monocytes. As to expression, widely expressed, highest in lung, liver and pituitary and in various peripheral blood cells, including neutrophils and some subtypes of lymphoid and myeloid cells.

It is found in the cell membrane. The protein localises to the early endosome membrane. Its subcellular location is the recycling endosome membrane. It localises to the nucleus. The protein resides in the endomembrane system. It is found in the secreted. Its function is as follows. Plays a critical role in induction and maintenance of immune tolerance to self. As a ligand for the inhibitory receptor PDCD1/PD-1, modulates the activation threshold of T-cells and limits T-cell effector response. Through a yet unknown activating receptor, may costimulate T-cell subsets that predominantly produce interleukin-10 (IL10). Can also act as a transcription coactivator: in response to hypoxia, translocates into the nucleus via its interaction with phosphorylated STAT3 and promotes transcription of GSDMC, leading to pyroptosis. Functionally, the PDCD1-mediated inhibitory pathway is exploited by tumors to attenuate anti-tumor immunity and escape destruction by the immune system, thereby facilitating tumor survival. The interaction with PDCD1/PD-1 inhibits cytotoxic T lymphocytes (CTLs) effector function. The blockage of the PDCD1-mediated pathway results in the reversal of the exhausted T-cell phenotype and the normalization of the anti-tumor response, providing a rationale for cancer immunotherapy. This Homo sapiens (Human) protein is Programmed cell death 1 ligand 1.